Consider the following 150-residue polypeptide: Protein-export protein SecB (150 aa).

This sequence belongs to the SecB family. In terms of assembly, homotetramer, a dimer of dimers. One homotetramer interacts with 1 SecA dimer.

The protein resides in the cytoplasm. Functionally, one of the proteins required for the normal export of preproteins out of the cell cytoplasm. It is a molecular chaperone that binds to a subset of precursor proteins, maintaining them in a translocation-competent state. It also specifically binds to its receptor SecA. The sequence is that of Protein-export protein SecB from Acidovorax ebreus (strain TPSY) (Diaphorobacter sp. (strain TPSY)).